A 729-amino-acid chain; its full sequence is Glycerophosphodiester phosphodiesterase GDPDL5 (729 aa).

The N-terminal stretch at methionine 1–serine 22 is a signal peptide. GP-PDE domains are found at residues proline 33–isoleucine 320 and isoleucine 337–arginine 645. Asparagine 88, asparagine 162, asparagine 218, asparagine 227, asparagine 285, asparagine 302, asparagine 390, asparagine 401, and asparagine 507 each carry an N-linked (GlcNAc...) asparagine glycan. Residues alanine 709 to valine 729 traverse the membrane as a helical segment.

The protein belongs to the glycerophosphoryl diester phosphodiesterase family. In terms of tissue distribution, expressed in stems, flowers and siliques.

It localises to the membrane. The enzyme catalyses a sn-glycero-3-phosphodiester + H2O = an alcohol + sn-glycerol 3-phosphate + H(+). This chain is Glycerophosphodiester phosphodiesterase GDPDL5, found in Arabidopsis thaliana (Mouse-ear cress).